A 1022-amino-acid polypeptide reads, in one-letter code: MARFPQLLFLLLASIGLLSAAQNHSDSEWPLHDNGLSTVVQWDHYSFHVHGQRIFVFSGEFHYWRIPVPGLWRDILEKIKAAGFTAFAFYSSWGYHAPNNHTVDFSTGARDITPIYELAKELGMYIIVRPGPYVNAEASAGGYPLWVTTGAYGSLRNDDARYTAAWKPYFAKMSEITSQYQVTDGHNTFCYQIENEYGQQWIGDPVDRNPNQTAVAYMELLEASARENGIVVPLTANDPNMNTKSWGSDWSHAGGNVDVVGLDSYPSCWTCDVTQCTSTNGEYVPYKVMQYYDYFQEVQPTMPGFMPEFQGGSYNPWAGPEGGCPGDTGVDFANLFYRWNIAQRVTAMSLYMLYGGTNWGAIAAPVTATSYDYSSPISEDRSIGSKYYETKLLALFTRSATDLTMTDRIGNGTHYTNNPAVAAYELRNPVTNGAFYVTIHADSTVGTDESFRLNVNTSAGALTVPSKGSIRLNGHQSKIIVTDFRFGPSHTLLYSTAEVLTHAVMDKKATLVLWVPTGESGEFAVKGAKSGKVERCPQCSNATFTRKKDVLVVNFTQAGGMSVLQLNNGVRVVLLDRAAAYKFWAPPLTDDPFAPETDLVLVQGPYLVRSASLSGSTLALRGDSANETALEVFASKKVHTVTWNGKRIKTSRSSYGSLTASLAAPPAVSLPALSSAQWKSQDSLPERLPSYDDSGPAWVDANHMTTQNPRTPDTLPVLYADEYGFHNGIRLWRGSFTDAASGVYLNVQGGAAFGWSAYLNGHFLGSHLGTATTSQANKTLLFPAGTLRKNTTNTILVIHDDTGHDQTTGALNPRGILAARLLAPSDSSTAPNFTQWRVAGTAGGESDLDPVRGVYNEDGLFAERMGWHLPGFDDADWPANNSTTTRGAQVSLSVTGATVRFFRAVVPLHLPRGVDASISFMLGTPAGASTAYRAQLFVNGYQYGRFYPHIGNQVVYPVPAGVLDYDGENTIGVAVWAQSEAGAEMSLDWRVNYVADSSLDAVRVAAEGALRPGWSEERLQYA.

The signal sequence occupies residues 1 to 20 (MARFPQLLFLLLASIGLLSA). N-linked (GlcNAc...) asparagine glycosylation is present at asparagine 23. Position 90 (tyrosine 90) interacts with substrate. An N-linked (GlcNAc...) asparagine glycan is attached at asparagine 100. Asparagine 135, alanine 136, glutamate 137, and asparagine 195 together coordinate substrate. The active-site Proton donor is the glutamate 196. Asparagine 211 carries N-linked (GlcNAc...) asparagine glycosylation. Tyrosine 265 contacts substrate. Cysteines 271 and 324 form a disulfide. The active-site Nucleophile is glutamate 308. A substrate-binding site is contributed by tyrosine 373. N-linked (GlcNAc...) asparagine glycosylation is found at asparagine 411, asparagine 456, asparagine 541, asparagine 554, asparagine 626, asparagine 777, asparagine 790, asparagine 832, asparagine 880, and asparagine 881.

Belongs to the glycosyl hydrolase 35 family.

It is found in the secreted. The enzyme catalyses Hydrolysis of terminal non-reducing beta-D-galactose residues in beta-D-galactosides.. Functionally, cleaves beta-linked terminal galactosyl residues from gangliosides, glycoproteins, and glycosaminoglycans. The sequence is that of Probable beta-galactosidase B (lacB) from Aspergillus terreus (strain NIH 2624 / FGSC A1156).